The following is a 151-amino-acid chain: Ribosome-binding factor A (151 aa).

Positions arginine 120–glutamate 151 are disordered.

This sequence belongs to the RbfA family. In terms of assembly, monomer. Binds 30S ribosomal subunits, but not 50S ribosomal subunits or 70S ribosomes.

It is found in the cytoplasm. Functionally, one of several proteins that assist in the late maturation steps of the functional core of the 30S ribosomal subunit. Associates with free 30S ribosomal subunits (but not with 30S subunits that are part of 70S ribosomes or polysomes). Required for efficient processing of 16S rRNA. May interact with the 5'-terminal helix region of 16S rRNA. The protein is Ribosome-binding factor A of Xanthobacter autotrophicus (strain ATCC BAA-1158 / Py2).